The chain runs to 271 residues: Putative carboxymethylenebutenolidase (271 aa).

Active-site residues include cysteine 147, aspartate 204, and histidine 236.

This sequence belongs to the dienelactone hydrolase family.

The enzyme catalyses 2-(5-oxo-2,5-dihydrofuran-2-ylidene)acetate + H2O = 4-oxohex-2-enedioate + H(+). The polypeptide is Putative carboxymethylenebutenolidase (ysgA) (Escherichia coli O157:H7).